A 260-amino-acid polypeptide reads, in one-letter code: Cytosolic Fe-S cluster assembly factor Nubp2 homolog (260 aa).

Residue 14-21 (GKGGVGKS) participates in ATP binding. The [4Fe-4S] cluster site is built by cysteine 188 and cysteine 191.

Belongs to the Mrp/NBP35 ATP-binding proteins family. NUBP2/CFD1 subfamily. In terms of assembly, heterotetramer of 2 Nubp1 and 2 Nubp2 chains. Requires [4Fe-4S] cluster as cofactor.

The protein resides in the cytoplasm. Component of the cytosolic iron-sulfur (Fe/S) protein assembly (CIA) machinery. Required for maturation of extramitochondrial Fe-S proteins. The Nubp1-Nubp2 heterotetramer forms a Fe-S scaffold complex, mediating the de novo assembly of an Fe-S cluster and its transfer to target apoproteins. In Drosophila erecta (Fruit fly), this protein is Cytosolic Fe-S cluster assembly factor Nubp2 homolog.